Reading from the N-terminus, the 436-residue chain is GTPase Der (436 aa).

EngA-type G domains are found at residues 4-165 (NVIA…NFDS) and 172-347 (FKLS…ENLE). Residues 10–17 (GKPNVGKS), 57–61 (DTGGI), 119–122 (NKLD), 178–185 (GQPNSGKS), 225–229 (DTAGI), and 290–293 (NKWD) contribute to the GTP site. Positions 348 to 432 (REIKPSVLTN…PINIIFKNKS (85 aa)) constitute a KH-like domain.

It belongs to the TRAFAC class TrmE-Era-EngA-EngB-Septin-like GTPase superfamily. EngA (Der) GTPase family. As to quaternary structure, associates with the 50S ribosomal subunit.

GTPase that plays an essential role in the late steps of ribosome biogenesis. The chain is GTPase Der from Mycoplasmopsis agalactiae (strain NCTC 10123 / CIP 59.7 / PG2) (Mycoplasma agalactiae).